Reading from the N-terminus, the 290-residue chain is Sodium/potassium-transporting ATPase subunit beta-2 (290 aa).

Residues 1 to 39 are Cytoplasmic-facing; sequence MVIQKEKKSCGQVVEEWKEFVWNPRTHQFMGRTGTSWAF. The chain crosses the membrane as a helical; Signal-anchor for type II membrane protein span at residues 40–67; that stretch reads ILLFYLVFYGFLTAMFTLTMWVMLQTVS. Over 68–290 the chain is Extracellular; the sequence is DHTPKYQDRL…VAFKLRINKA (223 aa). 2 N-linked (GlcNAc...) asparagine glycosylation sites follow: asparagine 96 and asparagine 118. The cysteines at positions 129 and 150 are disulfide-linked. 2 N-linked (GlcNAc...) asparagine glycosylation sites follow: asparagine 153 and asparagine 159. Cysteine 160 and cysteine 177 are joined by a disulfide. Asparagine 193, asparagine 197, and asparagine 238 each carry an N-linked (GlcNAc...) asparagine glycan. Residues 193–290 form an immunoglobulin-like region; that stretch reads NQSMNVTCVG…VAFKLRINKA (98 aa). Cysteine 200 and cysteine 261 are joined by a disulfide.

It belongs to the X(+)/potassium ATPases subunit beta family. In terms of assembly, the sodium/potassium-transporting ATPase is composed of a catalytic alpha subunit, an auxiliary non-catalytic beta subunit and an additional regulatory subunit. Interacts with isoform 2 of BSG. In terms of tissue distribution, highly expressed in brain (at protein level).

It localises to the cell membrane. This is the non-catalytic component of the active enzyme, which catalyzes the hydrolysis of ATP coupled with the exchange of Na(+) and K(+) ions across the plasma membrane. The exact function of the beta-2 subunit is not known. Functionally, mediates cell adhesion of neurons and astrocytes, and promotes neurite outgrowth. This is Sodium/potassium-transporting ATPase subunit beta-2 (Atp1b2) from Rattus norvegicus (Rat).